The sequence spans 149 residues: MNAYPWLEIPRTVRFSDTDAAGVMHFQHLLGWCHQAWEDSLEQFGIPVGAVFPGGRSDQPSVALPIVHCHADFRAPMYVGDAAVIHLLPKRIDPGCFEVVSEISLNTQKVASGCLQHLAIDAVTRQRCSLPEPIERWIEASTLGQIQPL.

Asp19 is a catalytic residue.

It belongs to the 4-hydroxybenzoyl-CoA thioesterase family. DHNA-CoA hydrolase subfamily.

It carries out the reaction 1,4-dihydroxy-2-naphthoyl-CoA + H2O = 1,4-dihydroxy-2-naphthoate + CoA + H(+). The protein operates within cofactor biosynthesis; phylloquinone biosynthesis. It participates in quinol/quinone metabolism; 1,4-dihydroxy-2-naphthoate biosynthesis; 1,4-dihydroxy-2-naphthoate from chorismate: step 7/7. In terms of biological role, catalyzes the hydrolysis of 1,4-dihydroxy-2-naphthoyl-CoA (DHNA-CoA) to 1,4-dihydroxy-2-naphthoate (DHNA), a reaction involved in phylloquinone (vitamin K1) biosynthesis. This Synechococcus sp. (strain CC9902) protein is 1,4-dihydroxy-2-naphthoyl-CoA hydrolase.